Here is a 495-residue protein sequence, read N- to C-terminus: UDP-N-acetylmuramoyl-L-alanyl-D-glutamate--2,6-diaminopimelate ligase (495 aa).

UDP-N-acetyl-alpha-D-muramoyl-L-alanyl-D-glutamate is bound by residues Leu27, Ser29, and 44 to 46 (HQA). An ATP-binding site is contributed by 116 to 122 (GTNGKTT). Residues Asn157, 158-159 (TT), Ser185, Gln191, and Arg193 contribute to the UDP-N-acetyl-alpha-D-muramoyl-L-alanyl-D-glutamate site. Lys225 carries the N6-carboxylysine modification. Residues Arg390, 414-417 (DNPR), Gly465, and Glu469 contribute to the meso-2,6-diaminopimelate site. Positions 414–417 (DNPR) match the Meso-diaminopimelate recognition motif motif.

It belongs to the MurCDEF family. MurE subfamily. It depends on Mg(2+) as a cofactor. Carboxylation is probably crucial for Mg(2+) binding and, consequently, for the gamma-phosphate positioning of ATP.

It localises to the cytoplasm. The enzyme catalyses UDP-N-acetyl-alpha-D-muramoyl-L-alanyl-D-glutamate + meso-2,6-diaminopimelate + ATP = UDP-N-acetyl-alpha-D-muramoyl-L-alanyl-gamma-D-glutamyl-meso-2,6-diaminopimelate + ADP + phosphate + H(+). The protein operates within cell wall biogenesis; peptidoglycan biosynthesis. Catalyzes the addition of meso-diaminopimelic acid to the nucleotide precursor UDP-N-acetylmuramoyl-L-alanyl-D-glutamate (UMAG) in the biosynthesis of bacterial cell-wall peptidoglycan. The protein is UDP-N-acetylmuramoyl-L-alanyl-D-glutamate--2,6-diaminopimelate ligase of Salmonella paratyphi A (strain ATCC 9150 / SARB42).